We begin with the raw amino-acid sequence, 262 residues long: VPS74-like protein DDB_G0288371 (262 aa).

Belongs to the GOLPH3/VPS74 family.

It localises to the golgi apparatus. It is found in the golgi stack membrane. In terms of biological role, phosphatidylinositol-4-phosphate-binding protein that links Golgi membranes to the cytoskeleton and may participate in the tensile force required for vesicle budding from the Golgi. Thereby, may play a role in Golgi membrane trafficking. May also bind to the coatomer to regulate Golgi membrane trafficking. May play a role in anterograde transport from the Golgi to the plasma membrane and regulate secretion. May be involved in vacuolar protein sorting. The protein is VPS74-like protein DDB_G0288371 of Dictyostelium discoideum (Social amoeba).